Consider the following 521-residue polypeptide: Adenosylhomocysteinase-like 1 (521 aa).

Residues 1 to 92 are disordered; the sequence is MNNLADTVVV…EKVQKNSKGS (92 aa). The span at 54 to 73 shows a compositional bias: low complexity; the sequence is RSLSASSTDSFSSASYTGSS. Substrate contacts are provided by D220 and E245. 246–248 provides a ligand contact to NAD(+); the sequence is SVT. 2 residues coordinate substrate: K275 and D279. NAD(+)-binding positions include 311–316, E332, 388–390, N435, K515, 515–519, and Y519; these read GDVGKG, MGH, and KPNYY.

Belongs to the adenosylhomocysteinase family. As to quaternary structure, interacts with Ahcy; the interaction may negatively regulate Ahcy catalytic activity. Requires NAD(+) as cofactor.

In terms of biological role, might play a role in the regulation of methionine metabolism possibly by binding and inactivating Ahcy. The sequence is that of Adenosylhomocysteinase-like 1 from Drosophila melanogaster (Fruit fly).